The primary structure comprises 133 residues: Large ribosomal subunit protein bL17 (133 aa).

It belongs to the bacterial ribosomal protein bL17 family. Part of the 50S ribosomal subunit. Contacts protein L32.

The polypeptide is Large ribosomal subunit protein bL17 (Idiomarina loihiensis (strain ATCC BAA-735 / DSM 15497 / L2-TR)).